Consider the following 386-residue polypeptide: TRIBOA-glucoside O-methyltransferase BX7 (386 aa).

Glycine 224, aspartate 248, methionine 270, and lysine 283 together coordinate S-adenosyl-L-methionine. Residue histidine 287 is the Proton acceptor of the active site.

It belongs to the class I-like SAM-binding methyltransferase superfamily. Cation-independent O-methyltransferase family. COMT subfamily. In terms of tissue distribution, expressed in seedlings and newly formed crown roots. Highest expression in the scutellar node. Low to non detectable levels in cob, tassel and mature organs like husk or leaves.

It catalyses the reaction TRIBOA beta-D-glucoside + S-adenosyl-L-methionine = DIMBOA beta-D-glucoside + S-adenosyl-L-homocysteine + H(+). In terms of biological role, O-methyltransferase involved in the benzoxazinoid glucoside biosynthesis. Can use 2,4,7-trihydroxy-2H-1,4-benzoxazin-3(4H)-one 2-D-glucoside (TRIBOA-glucoside) as substrate, but not aglucone TRIBOA, caffeic acid, ferulic acid, apigenin or quercetin. This chain is TRIBOA-glucoside O-methyltransferase BX7 (BX7), found in Zea mays (Maize).